Consider the following 98-residue polypeptide: NADH-ubiquinone oxidoreductase chain 4L (98 aa).

The next 3 membrane-spanning stretches (helical) occupy residues 1–21 (MSMVYINIFLAFILSFMGLLI), 30–50 (LLCLEGMMLSLFIMMTVTILT), and 61–81 (IILLVFAACEAALGLSLLVMI).

It belongs to the complex I subunit 4L family. Core subunit of respiratory chain NADH dehydrogenase (Complex I) which is composed of 45 different subunits.

Its subcellular location is the mitochondrion inner membrane. The catalysed reaction is a ubiquinone + NADH + 5 H(+)(in) = a ubiquinol + NAD(+) + 4 H(+)(out). Its function is as follows. Core subunit of the mitochondrial membrane respiratory chain NADH dehydrogenase (Complex I) which catalyzes electron transfer from NADH through the respiratory chain, using ubiquinone as an electron acceptor. Part of the enzyme membrane arm which is embedded in the lipid bilayer and involved in proton translocation. This chain is NADH-ubiquinone oxidoreductase chain 4L (MT-ND4L), found in Martes americana (American marten).